The following is a 1061-amino-acid chain: Transcription termination factor 2 (1061 aa).

2 disordered regions span residues 1–163 and 212–253; these read MSSE…TAEA and ILSS…VKTS. Residues 32–46 show a composition bias toward low complexity; it reads LSKSSRLSKSSRPSS. Phosphoserine is present on residues Ser-108 and Ser-110. The segment covering 138–152 has biased composition (acidic residues); the sequence is LSDDDSEIEYSDEVQ. Phosphoserine occurs at positions 214 and 215. A Phosphothreonine modification is found at Thr-216. The span at 237–253 shows a compositional bias: polar residues; the sequence is KSLSPRSSAGASVVKTS. The Helicase ATP-binding domain maps to 452 to 652; that stretch reads WRERKLPRGG…YALLKFLRCS (201 aa). ATP is bound at residue 465–472; that stretch reads DDMGLGKT. The segment at 485-523 is disordered; the sequence is GQEMSEGKDESSDSDSEDDKNKKRKSVTGWKSKGRKDTR. Residues 506 to 522 show a composition bias toward basic residues; sequence KKRKSVTGWKSKGRKDT. A DEAH box motif is present at residues 603–606; sequence DEAH. The Helicase C-terminal domain occupies 891–1056; that stretch reads KINMVIQILK…SSKLTIDDLK (166 aa).

It belongs to the SNF2/RAD54 helicase family.

The protein resides in the nucleus. Functionally, dsDNA-dependent ATPase which acts as a transcription termination factor by coupling ATP hydrolysis with removal of RNA polymerase II from the DNA template. The protein is Transcription termination factor 2 (lds) of Drosophila melanogaster (Fruit fly).